Consider the following 359-residue polypeptide: 4-galactosyl-N-acetylglucosaminide 3-alpha-L-fucosyltransferase 9 (359 aa).

Residues 1-11 are Cytoplasmic-facing; that stretch reads MTSTSKGILRP. A helical; Signal-anchor for type II membrane protein transmembrane segment spans residues 12–32; sequence FLIVCIILGCFVACLLIYIKP. At 33 to 359 the chain is on the lumenal side; sequence TNSWVFSPME…VGNLEKWFWN (327 aa). Asparagine 62 carries N-linked (GlcNAc...) asparagine glycosylation. An acceptor-binding region spans residues 63–168; it reads ETTILVWVWP…RRDSDIQVPY (106 aa). An a beta-D-galactosyl-(1-&gt;4)-N-acetyl-beta-D-glucosaminyl derivative-binding site is contributed by glutamine 75. 3 disulfides stabilise this stretch: cysteine 82-cysteine 335, cysteine 91-cysteine 338, and cysteine 190-cysteine 238. An N-linked (GlcNAc...) asparagine glycan is attached at asparagine 101. Residue glutamate 137 coordinates a beta-D-galactosyl-(1-&gt;4)-N-acetyl-beta-D-glucosaminyl derivative. Glutamate 137 (nucleophile) is an active-site residue. Residue glutamate 137 coordinates GDP-beta-L-fucose. Asparagine 153 carries N-linked (GlcNAc...) asparagine glycosylation. Positions 168, 192, 194, 195, 202, 226, 241, 246, 252, 255, and 256 each coordinate GDP-beta-L-fucose. The interval 169-326 is donor-binding; the sequence is GFLTVSTSPF…NWRKDFTVNL (158 aa). Residues 327 to 359 form an acceptor-binding region; the sequence is PRFWESHACLACDHVKRHQEYKSVGNLEKWFWN.

The protein belongs to the glycosyltransferase 10 family. Homodimer. In terms of processing, N-glycosylated with complex-type N-glycans.

The protein resides in the golgi apparatus. Its subcellular location is the trans-Golgi network membrane. It is found in the golgi apparatus membrane. The enzyme catalyses a beta-D-galactosyl-(1-&gt;4)-N-acetyl-beta-D-glucosaminyl derivative + GDP-beta-L-fucose = a beta-D-galactosyl-(1-&gt;4)-[alpha-L-fucosyl-(1-&gt;3)]-N-acetyl-beta-D-glucosaminyl derivative + GDP + H(+). It carries out the reaction an alpha-Neu5Ac-(2-&gt;3)-beta-D-Gal-(1-&gt;4)-beta-D-GlcNAc-(1-&gt;3)-beta-D-Gal-(1-&gt;4)-beta-D-GlcNAc derivative + GDP-beta-L-fucose = an alpha-Neu5Ac-(2-&gt;3)-beta-D-Gal-(1-&gt;4)-beta-D-GlcNAc-(1-&gt;3)-beta-D-Gal-(1-&gt;4)-[alpha-L-Fuc-(1-&gt;3)]-beta-D-GlcNAc derivative + GDP + H(+). The catalysed reaction is alpha-N-glycoloylneuraminosyl-(2-&gt;3)-beta-D-galactosyl-(1-&gt;4)-N-acetyl-beta-D-glucosaminyl-(1-&gt;3)-beta-D-galactosyl-(1-&gt;4)-N-acetyl-beta-D-glucosaminyl-(1-&gt;3)-beta-D-galactosyl-(1-&gt;4)-beta-D-glucosyl-(1&lt;-&gt;1')-ceramide + GDP-beta-L-fucose = alpha-N-glycoloylneuraminosyl-(2-&gt;3)-beta-D-galactosyl-(1-&gt;4)-N-acetyl-beta-D-glucosaminyl-(1-&gt;3)-beta-D-galactosyl-(1-&gt;4)-[alpha-L-fucosyl-(1-&gt;3)]-N-acetyl-beta-D-glucosaminyl-(1-&gt;3)-beta-D-galactosyl-(1-&gt;4)-beta-D-glucosyl-(1&lt;-&gt;1')-ceramide + GDP + H(+). It catalyses the reaction alpha-D-galactosyl-(1-&gt;3)-beta-D-galactosyl-(1-&gt;4)-N-acetyl-beta-D-glucosaminyl-(1-&gt;3)-beta-D-galactosyl-(1-&gt;4)-beta-D-glucosyl-(1&lt;-&gt;1')-ceramide + GDP-beta-L-fucose = a neolactoside IV(3)-alpha-Gal,III(3)-alpha-Fuc-nLc4Cer + GDP + H(+). The enzyme catalyses a neolactoside nLc4Cer + GDP-beta-L-fucose = a neolactoside III(3)-alpha-Fuc-nLc4Cer + GDP + H(+). It carries out the reaction an N-acetyl-alpha-neuraminyl-(2-&gt;3)-beta-D-galactosyl-(1-&gt;4)-N-acetyl-beta-D-glucosaminyl derivative + GDP-beta-L-fucose = an alpha-Neu5Ac-(2-&gt;3)-beta-D-Gal-(1-&gt;4)-[alpha-L-Fuc-(1-&gt;3)]-beta-D-GlcNAc derivative + GDP + H(+). The catalysed reaction is beta-D-Gal-(1-&gt;4)-beta-D-GlcNAc-(1-&gt;3)-beta-D-Gal-(1-&gt;4)-D-Glc + GDP-beta-L-fucose = beta-D-Gal-(1-&gt;4)-[alpha-L-Fuc-(1-&gt;3)]-beta-D-GlcNAc-(1-&gt;3)-beta-D-Gal-(1-&gt;4)-D-Glc + GDP + H(+). It catalyses the reaction an alpha-L-Fuc-(1-&gt;2)-beta-D-Gal-(1-&gt;4)-beta-D-GlcNAc derivative + GDP-beta-L-fucose = an alpha-L-Fuc-(1-&gt;2)-beta-D-Gal-(1-&gt;4)-[alpha-L-Fuc-(1-&gt;3)]-beta-D-GlcNAc derivative + GDP + H(+). Its pathway is protein modification; protein glycosylation. The protein operates within glycolipid biosynthesis. With respect to regulation, activated by Mn2+. Its function is as follows. Catalyzes alpha(1-&gt;3) linkage of fucosyl moiety transferred from GDP-beta-L-fucose to N-acetyl glucosamine (GlcNAc) within type 2 lactosamine (LacNAc, beta-D-Gal-(1-&gt;4)-beta-D-GlcNAc-) glycan attached to glycolipids and N- or O-linked glycoproteins. Fucosylates distal type 2 LacNAc and its fucosylated (H-type 2 LacNAc) and sialylated (sialyl-type 2 LacNAc) derivatives to form Lewis x (Lex) (CD15) and Lewis y (Ley) antigenic epitopes involved in cell adhesion and differentiation. Generates Lex epitopes in the brain, presumably playing a role in the maintenance of neuronal stemness and neurite outgrowth in progenitor neural cells. Fucosylates the internal type 2 LacNAc unit of the polylactosamine chain to form VIM-2 antigen that serves as recognition epitope for SELE. Can also modify milk oligosaccharides in particular type 2 tetrasaccharide LNnT. The polypeptide is 4-galactosyl-N-acetylglucosaminide 3-alpha-L-fucosyltransferase 9 (Rattus norvegicus (Rat)).